The primary structure comprises 178 residues: 3-hydroxyacyl-[acyl-carrier-protein] dehydratase FabZ (178 aa).

The active site involves H54.

This sequence belongs to the thioester dehydratase family. FabZ subfamily.

It localises to the cytoplasm. It carries out the reaction a (3R)-hydroxyacyl-[ACP] = a (2E)-enoyl-[ACP] + H2O. In terms of biological role, involved in unsaturated fatty acids biosynthesis. Catalyzes the dehydration of short chain beta-hydroxyacyl-ACPs and long chain saturated and unsaturated beta-hydroxyacyl-ACPs. The polypeptide is 3-hydroxyacyl-[acyl-carrier-protein] dehydratase FabZ (Yersinia enterocolitica).